The primary structure comprises 192 residues: Ion-translocating oxidoreductase complex subunit B (192 aa).

Residues 1-26 are hydrophobic; it reads MTAIWIAIAALSALALAFGLVLGYAS. The region spanning 32-91 is the 4Fe-4S domain; that stretch reads ENDPIVEEVEAMLPQSQCGQCGYPGCRPYAEAVSLNGESINKCGPGGEAMMLKLAEKLNV. Cys-49, Cys-52, Cys-57, Cys-74, Cys-117, Cys-120, Cys-123, Cys-127, Cys-147, Cys-150, Cys-153, and Cys-157 together coordinate [4Fe-4S] cluster. 4Fe-4S ferredoxin-type domains lie at 108-137 and 138-167; these read HVAW…GSTK and AVHT…LRPI.

Belongs to the 4Fe4S bacterial-type ferredoxin family. RnfB subfamily. The complex is composed of six subunits: RnfA, RnfB, RnfC, RnfD, RnfE and RnfG. [4Fe-4S] cluster serves as cofactor.

The protein resides in the cell inner membrane. In terms of biological role, part of a membrane-bound complex that couples electron transfer with translocation of ions across the membrane. The polypeptide is Ion-translocating oxidoreductase complex subunit B (Pectobacterium atrosepticum (strain SCRI 1043 / ATCC BAA-672) (Erwinia carotovora subsp. atroseptica)).